The following is a 223-amino-acid chain: NAD(P)H-hydrate epimerase (223 aa).

Residues Met-9–Phe-209 enclose the YjeF N-terminal domain. Position 57 to 61 (Asn-57 to Asp-61) interacts with (6S)-NADPHX. Positions 58 and 119 each coordinate K(+). (6S)-NADPHX is bound by residues Gly-123–Leu-129 and Asp-152. Thr-155 provides a ligand contact to K(+).

This sequence belongs to the NnrE/AIBP family. It depends on K(+) as a cofactor.

The enzyme catalyses (6R)-NADHX = (6S)-NADHX. The catalysed reaction is (6R)-NADPHX = (6S)-NADPHX. Catalyzes the epimerization of the S- and R-forms of NAD(P)HX, a damaged form of NAD(P)H that is a result of enzymatic or heat-dependent hydration. This is a prerequisite for the S-specific NAD(P)H-hydrate dehydratase to allow the repair of both epimers of NAD(P)HX. This chain is NAD(P)H-hydrate epimerase, found in Leuconostoc gelidum subsp. gasicomitatum (strain DSM 15947 / CCUG 46042 / CECT 5767 / JCM 12535 / LMG 18811 / NBRC 113245 / TB1-10) (Leuconostoc gasicomitatum).